Consider the following 395-residue polypeptide: Elongation factor Tu (395 aa).

Residues 10–204 (KPHVNIGTIG…AVDSYIPTPQ (195 aa)) enclose the tr-type G domain. Positions 19–26 (GHVDHGKT) are G1. GTP is bound at residue 19–26 (GHVDHGKT). Thr26 provides a ligand contact to Mg(2+). Residues 60-64 (GITIN) form a G2 region. The segment at 81–84 (DCPG) is G3. GTP-binding positions include 81–85 (DCPGH) and 136–139 (NKCD). The tract at residues 136-139 (NKCD) is G4. A G5 region spans residues 174-176 (SAL).

It belongs to the TRAFAC class translation factor GTPase superfamily. Classic translation factor GTPase family. EF-Tu/EF-1A subfamily. Monomer.

Its subcellular location is the cytoplasm. It carries out the reaction GTP + H2O = GDP + phosphate + H(+). Its function is as follows. GTP hydrolase that promotes the GTP-dependent binding of aminoacyl-tRNA to the A-site of ribosomes during protein biosynthesis. The protein is Elongation factor Tu of Symbiobacterium thermophilum (strain DSM 24528 / JCM 14929 / IAM 14863 / T).